Consider the following 471-residue polypeptide: Siroheme synthase 1 (471 aa).

Positions 1 to 203 (MEYLPLFAQL…GDTRAAEAVL (203 aa)) are precorrin-2 dehydrogenase /sirohydrochlorin ferrochelatase. Residues 22–23 (EV) and 43–44 (KK) each bind NAD(+). Serine 128 bears the Phosphoserine mark. Residues 215-471 (GEIILVGAGP…NLRSSVVNLA (257 aa)) form a uroporphyrinogen-III C-methyltransferase region. Residue proline 224 participates in S-adenosyl-L-methionine binding. Catalysis depends on aspartate 247, which acts as the Proton acceptor. Lysine 269 functions as the Proton donor in the catalytic mechanism. S-adenosyl-L-methionine is bound by residues 300–302 (GGD), isoleucine 305, 330–331 (TA), methionine 382, and glycine 411.

In the N-terminal section; belongs to the precorrin-2 dehydrogenase / sirohydrochlorin ferrochelatase family. This sequence in the C-terminal section; belongs to the precorrin methyltransferase family.

It catalyses the reaction uroporphyrinogen III + 2 S-adenosyl-L-methionine = precorrin-2 + 2 S-adenosyl-L-homocysteine + H(+). The catalysed reaction is precorrin-2 + NAD(+) = sirohydrochlorin + NADH + 2 H(+). It carries out the reaction siroheme + 2 H(+) = sirohydrochlorin + Fe(2+). It functions in the pathway cofactor biosynthesis; adenosylcobalamin biosynthesis; precorrin-2 from uroporphyrinogen III: step 1/1. It participates in cofactor biosynthesis; adenosylcobalamin biosynthesis; sirohydrochlorin from precorrin-2: step 1/1. The protein operates within porphyrin-containing compound metabolism; siroheme biosynthesis; precorrin-2 from uroporphyrinogen III: step 1/1. Its pathway is porphyrin-containing compound metabolism; siroheme biosynthesis; siroheme from sirohydrochlorin: step 1/1. It functions in the pathway porphyrin-containing compound metabolism; siroheme biosynthesis; sirohydrochlorin from precorrin-2: step 1/1. In terms of biological role, multifunctional enzyme that catalyzes the SAM-dependent methylations of uroporphyrinogen III at position C-2 and C-7 to form precorrin-2 via precorrin-1. Then it catalyzes the NAD-dependent ring dehydrogenation of precorrin-2 to yield sirohydrochlorin. Finally, it catalyzes the ferrochelation of sirohydrochlorin to yield siroheme. This Cronobacter sakazakii (strain ATCC BAA-894) (Enterobacter sakazakii) protein is Siroheme synthase 1.